Consider the following 512-residue polypeptide: ETS translocation variant 3 (512 aa).

Residues 35-116 (IQLWHFILEL…KGKRFTYKFN (82 aa)) constitute a DNA-binding region (ETS). The segment at 136–222 (VPQSAPPVPT…NAIGGGGIGH (87 aa)) is disordered. A phosphoserine mark is found at serine 139, serine 159, and serine 315. The segment covering 158-184 (HSPTNDVQPGRFSASSLTASGQESSNG) has biased composition (polar residues). Residues 336 to 512 (PEESTQFSIK…QGLATAAADA (177 aa)) form a disordered region. The span at 380–406 (IKVEPASEKDPESLRQSAREKEEHTQE) shows a compositional bias: basic and acidic residues. A Glycyl lysine isopeptide (Lys-Gly) (interchain with G-Cter in SUMO2) cross-link involves residue lysine 381. The residue at position 388 (lysine 388) is an N6-acetyllysine; alternate. Residue lysine 388 forms a Glycyl lysine isopeptide (Lys-Gly) (interchain with G-Cter in SUMO2); alternate linkage. Positions 443–452 (EPLEVTEDIE) are enriched in acidic residues. Basic and acidic residues-rich tracts occupy residues 453-468 (DRPG…KEDA) and 479-491 (RWND…ELSK).

The protein belongs to the ETS family.

It localises to the nucleus. In terms of biological role, transcriptional repressor that contribute to growth arrest during terminal macrophage differentiation by repressing target genes involved in Ras-dependent proliferation. Represses MMP1 promoter activity. This is ETS translocation variant 3 (ETV3) from Pan paniscus (Pygmy chimpanzee).